Reading from the N-terminus, the 973-residue chain is UvrABC system protein A (973 aa).

ATP is bound at residue 34–41 (GLSGSGKS). 2 ABC transporter domains span residues 331 to 609 (WAKS…PKSL) and 629 to 958 (PKKG…HFLK). 662 to 669 (GVSGGGKS) contributes to the ATP binding site. The C4-type zinc-finger motif lies at 761–787 (CEACQGDGVIKIEMHFLPDVYVTCDVC).

It belongs to the ABC transporter superfamily. UvrA family. As to quaternary structure, forms a heterotetramer with UvrB during the search for lesions.

The protein localises to the cytoplasm. The UvrABC repair system catalyzes the recognition and processing of DNA lesions. UvrA is an ATPase and a DNA-binding protein. A damage recognition complex composed of 2 UvrA and 2 UvrB subunits scans DNA for abnormalities. When the presence of a lesion has been verified by UvrB, the UvrA molecules dissociate. This chain is UvrABC system protein A, found in Agrobacterium fabrum (strain C58 / ATCC 33970) (Agrobacterium tumefaciens (strain C58)).